We begin with the raw amino-acid sequence, 454 residues long: Protection of telomeres protein 1b (454 aa).

It belongs to the telombin family. Interacts with TRB1, TRB2 and TRB3. As to expression, expressed at low levels in roots, rosette leaves, cauline leaves, stems and flowers.

The protein resides in the nucleus. It localises to the chromosome. It is found in the telomere. Negatively regulates telomerase activity and participates in chromosome end protection. Binds RNA non-specifically. Associates with a regulatory Pol III-dependent lncRNA, which represses telomerase activity in response to DNA damage. Binds single-stranded telomeric DNA with weak affinity. In Arabidopsis thaliana (Mouse-ear cress), this protein is Protection of telomeres protein 1b.